The following is a 455-amino-acid chain: MTLTQEFDTIAAISTPLGEGAIAIVRLSGTDALKIAQSVYKGKNLAQVASHTINYGHIFEEERLVDEVMVSVMRAPKTFTREDIVEINTHGGIAVTQEILQLLLRNGARLAEPGEFTKRAFLNGRIDLAQAESVMDLIRAKTDKAANIAVKQLDGSLSKMINNIRQEILESLAQVEVNIDYPEYDDVETMTSQMLLEKTAHFEQLLENLLSTAKRGKILREGLKTAIIGRPNVGKSSLLNQLLREEKAIVTDIAGTTRDVITEFANIGGVPLELVDTAGIRETDDLVEAIGIERSKKALAEADLVLLVLDASLELTDKDLELLELSKNANRIVLLNKTDLPEKLDINQISGDFIRISALKNENLSAVEEKINQIFFAGEIEAKDATVLSNARHISLVEEALKALKEANNGLALGLPVDLIQVDVTRCWQLLGEITGEAAPDELITQLFSQFCLGK.

3 residues coordinate (6S)-5-formyl-5,6,7,8-tetrahydrofolate: R26, E86, and R125. Residues 222 to 376 (GLKTAIIGRP…VEEKINQIFF (155 aa)) form the TrmE-type G domain. Residue N232 participates in K(+) binding. Residues 232–237 (NVGKSS), 251–257 (TDIAGTT), and 276–279 (DTAG) each bind GTP. S236 is a binding site for Mg(2+). Residues T251, I253, and T256 each contribute to the K(+) site. T257 provides a ligand contact to Mg(2+). K455 is a (6S)-5-formyl-5,6,7,8-tetrahydrofolate binding site.

Belongs to the TRAFAC class TrmE-Era-EngA-EngB-Septin-like GTPase superfamily. TrmE GTPase family. In terms of assembly, homodimer. Heterotetramer of two MnmE and two MnmG subunits. The cofactor is K(+).

It is found in the cytoplasm. In terms of biological role, exhibits a very high intrinsic GTPase hydrolysis rate. Involved in the addition of a carboxymethylaminomethyl (cmnm) group at the wobble position (U34) of certain tRNAs, forming tRNA-cmnm(5)s(2)U34. This Lactococcus lactis subsp. cremoris (strain MG1363) protein is tRNA modification GTPase MnmE.